A 78-amino-acid chain; its full sequence is DNA-directed RNA polymerase subunit Rpo5 (78 aa).

Belongs to the archaeal Rpo5/eukaryotic RPB5 RNA polymerase subunit family. In terms of assembly, part of the RNA polymerase complex.

Its subcellular location is the cytoplasm. The enzyme catalyses RNA(n) + a ribonucleoside 5'-triphosphate = RNA(n+1) + diphosphate. Its function is as follows. DNA-dependent RNA polymerase (RNAP) catalyzes the transcription of DNA into RNA using the four ribonucleoside triphosphates as substrates. The chain is DNA-directed RNA polymerase subunit Rpo5 from Methanosarcina barkeri (strain Fusaro / DSM 804).